A 357-amino-acid polypeptide reads, in one-letter code: Ion-translocating oxidoreductase complex subunit D (357 aa).

Helical transmembrane passes span 35–55 (VWLY…TVLV), 88–108 (LPPW…VVLG), and 119–139 (LFNP…VEMT). FMN phosphoryl threonine is present on threonine 176. The next 5 membrane-spanning stretches (helical) occupy residues 209-229 (APGS…VYLI), 233-253 (VIAW…ATVF), 261-281 (YADA…FFIA), 295-315 (AVFA…GGYP), and 316-336 (EATA…DHWI).

It belongs to the NqrB/RnfD family. In terms of assembly, the complex is composed of six subunits: RnfA, RnfB, RnfC, RnfD, RnfE and RnfG. The cofactor is FMN.

The protein localises to the cell inner membrane. Functionally, part of a membrane-bound complex that couples electron transfer with translocation of ions across the membrane. This chain is Ion-translocating oxidoreductase complex subunit D, found in Halorhodospira halophila (strain DSM 244 / SL1) (Ectothiorhodospira halophila (strain DSM 244 / SL1)).